The chain runs to 359 residues: Protein RecA (359 aa).

Residue 64 to 71 (GHESSGKT) coordinates ATP. Positions 329–359 (KYSNKDSNDSPKEGSKIKTKVNPAVTQDELI) are disordered. Over residues 331-344 (SNKDSNDSPKEGSK) the composition is skewed to basic and acidic residues.

It belongs to the RecA family.

The protein resides in the cytoplasm. Can catalyze the hydrolysis of ATP in the presence of single-stranded DNA, the ATP-dependent uptake of single-stranded DNA by duplex DNA, and the ATP-dependent hybridization of homologous single-stranded DNAs. It interacts with LexA causing its activation and leading to its autocatalytic cleavage. The chain is Protein RecA from Francisella tularensis subsp. tularensis (strain FSC 198).